We begin with the raw amino-acid sequence, 163 residues long: Putative pre-16S rRNA nuclease (163 aa).

The protein belongs to the YqgF nuclease family.

Its subcellular location is the cytoplasm. Its function is as follows. Could be a nuclease involved in processing of the 5'-end of pre-16S rRNA. In Rhodopseudomonas palustris (strain BisB18), this protein is Putative pre-16S rRNA nuclease.